Reading from the N-terminus, the 390-residue chain is Glutamate 5-kinase (390 aa).

Lys29 is a binding site for ATP. The substrate site is built by Ser69, Asp156, and Asn168. Residue 188–189 (TD) participates in ATP binding. The region spanning 295–374 (SGSLIVDAGA…EQFDRILGNN (80 aa)) is the PUA domain.

This sequence belongs to the glutamate 5-kinase family.

It is found in the cytoplasm. The catalysed reaction is L-glutamate + ATP = L-glutamyl 5-phosphate + ADP. It participates in amino-acid biosynthesis; L-proline biosynthesis; L-glutamate 5-semialdehyde from L-glutamate: step 1/2. In terms of biological role, catalyzes the transfer of a phosphate group to glutamate to form L-glutamate 5-phosphate. This Psychrobacter cryohalolentis (strain ATCC BAA-1226 / DSM 17306 / VKM B-2378 / K5) protein is Glutamate 5-kinase.